Reading from the N-terminus, the 315-residue chain is Neurogenic differentiation factor 4 (315 aa).

The segment at 39–71 (ERGSIDGEEDDEEEEDGEKPKKRGPKKKKMTKA) is disordered. Over residues 44–55 (DGEEDDEEEEDG) the composition is skewed to acidic residues. Over residues 58-70 (PKKRGPKKKKMTK) the composition is skewed to basic residues. The bHLH domain maps to 78 to 130 (VRRVKANARERSRMHGLNDALENLRRVMPCYSKTQKLSKIETLRLARNYIWAL). Ser89 carries the phosphoserine modification.

In terms of assembly, efficient DNA binding requires dimerization with another bHLH protein. Forms a heterodimer with the bHLH protein hes2, and weakly interacts with hey1/hrt1. Serine or threonine phosphorylation within the basic region may regulate neurogenic activity. In terms of tissue distribution, first expressed weakly at stage 12 in primary neuronal precursors. At stages 18 and 21, strongly expressed in the cranial ganglions, with weaker expression remaining in the spinal cord. Later, strongly expressed at sites of neuronal differentiation, namely the eye, forebrain and cranial ganglions.

It localises to the nucleus. In terms of biological role, probably acts as a transcriptional activator. Mediates neuronal differentiation. Required for the regulation of amacrine cell fate specification in the retina. In Xenopus laevis (African clawed frog), this protein is Neurogenic differentiation factor 4 (neurod4).